Reading from the N-terminus, the 313-residue chain is Solute carrier family 25 member 36 (313 aa).

3 Solcar repeats span residues 4-110 (RDTL…CKEK), 118-205 (DSTQ…IKRK), and 226-310 (SDFV…VVYL). A run of 6 helical transmembrane segments spans residues 7–27 (LVHLFAGGCGGTVGAILTCPL), 41–57 (LYISEVHLNTVNGASVN), 113–133 (NIFNPDSTQVHMISAGVAGFT), 182–202 (MSASYAGISETVIHFVIYESI), 228–248 (FVGMMMAAATSKTCATSIAYP), and 293–313 (QIPNTAIMMSTYEVVVYLLDG).

Belongs to the mitochondrial carrier (TC 2.A.29) family.

The protein localises to the mitochondrion inner membrane. In terms of biological role, mitochondrial transporter that imports/exports pyrimidine nucleotides into and from mitochondria. Transports preferentially cytosine and uracil (deoxy)nucleoside mono-, di-, and triphosphates by uniport and antiport mechanism. The sequence is that of Solute carrier family 25 member 36 (SLC25A36) from Gallus gallus (Chicken).